Consider the following 362-residue polypeptide: uncharacterized protein (362 aa).

A helical membrane pass occupies residues 13 to 33; that stretch reads VLILSVGLNMLFLLLFYSAIF. In terms of domain architecture, LysM spans 314–357; it reads EEYVVQDGDSLWLIAKRFGIPMDKIIQKNGLNHHRLFPGKVLKL.

It belongs to the chlamydial CPn_0593/CT_474/TC_0759 family.

The protein localises to the membrane. This is an uncharacterized protein from Chlamydia pneumoniae (Chlamydophila pneumoniae).